The chain runs to 994 residues: Sarcoplasmic/endoplasmic reticulum calcium ATPase 1 (994 aa).

Over 1 to 48 (MEQAHTKTTEECLAYFGVNENTGLSLDQVKKNFDKFGPNELPAEEGKS) the chain is Cytoplasmic. Residues 49 to 69 (LWELVAEQFEDLLVRILLLAA) form a helical membrane-spanning segment. At 70–89 (IISFVLAWFEEGEETVTAFV) the chain is on the lumenal side. The helical transmembrane segment at 90 to 110 (EPFVILLILIANAVVGVWQER) threads the bilayer. Residues 111–253 (NAEDAIEALK…QEKTPLQQKL (143 aa)) are Cytoplasmic-facing. A helical transmembrane segment spans residues 254–273 (DEFGEQLSKVISLICVAVWL). The Lumenal segment spans residues 274-295 (INIGHFNDPIHGGSWIKGAIYY). A helical membrane pass occupies residues 296–313 (FKIAVALAVAAIPEGLPA). Val-304, Ala-305, Ile-307, and Glu-309 together coordinate Ca(2+). At 314 to 757 (VITTCLALGT…EEGRAIYNNM (444 aa)) the chain is on the cytoplasmic side. The active-site 4-aspartylphosphate intermediate is Asp-351. Positions 351 and 353 each coordinate Mg(2+). The ATP site is built by Thr-353, Glu-442, Arg-489, Lys-515, Arg-560, Thr-625, Gly-626, Asp-627, Arg-678, and Lys-684. Residue Asp-703 participates in Mg(2+) binding. Asn-706 contributes to the ATP binding site. The chain crosses the membrane as a helical span at residues 758–777 (KQFIRYLISSNVGEVVCIFL). Positions 768 and 771 each coordinate Ca(2+). Residues 778 to 787 (TAALGLPEAL) are Lumenal-facing. A helical transmembrane segment spans residues 788–808 (IPVQLLWVNLVTDGLPATALG). The tract at residues 788–808 (IPVQLLWVNLVTDGLPATALG) is interaction with PLN. Residues Asn-796, Thr-799, and Asp-800 each contribute to the Ca(2+) site. At 809 to 828 (FNPPDLDIMDRPPRSPKEPL) the chain is on the cytoplasmic side. A helical transmembrane segment spans residues 829–851 (ISGWLFFRYMAIGGYVGAATVGA). The Lumenal segment spans residues 852–897 (AAWWFMYADDGPNVTFYQLSHFMQCTEDNPDFEGHECEIFESPVPM). Cys-876 and Cys-888 form a disulfide bridge. Residues 898-917 (TMALSVLVTIEMCNALNSLS) traverse the membrane as a helical segment. Glu-908 contributes to the Ca(2+) binding site. At 918-930 (ENQSLIRMPPWSN) the chain is on the cytoplasmic side. A helical transmembrane segment spans residues 931–949 (FWLLGSICLSMSLHFLILY). Residues 932–943 (WLLGSICLSMSL) form an interaction with PLN region. Topologically, residues 950–964 (VEPLPMIFKLTPLNV) are lumenal. Residues 965 to 985 (EQWFIVLKMSFPVILLDELLK) form a helical membrane-spanning segment. The Cytoplasmic portion of the chain corresponds to 986-994 (FVARNYLEG).

It belongs to the cation transport ATPase (P-type) (TC 3.A.3) family. Type IIA subfamily. In terms of assembly, interacts with sarcolipin (SLN). Interacts with phospholamban (PLN). Interacts with myoregulin (MRLN). Interacts with DWORF. Interacts with VMP1. Mg(2+) is required as a cofactor.

It is found in the endoplasmic reticulum membrane. The protein resides in the sarcoplasmic reticulum membrane. It catalyses the reaction Ca(2+)(in) + ATP + H2O = Ca(2+)(out) + ADP + phosphate + H(+). Inhibited by sarcolipin (SLN) and myoregulin (MRLN). Also shown to be inhibited by phospholamban (PLN) in vitro. Enhanced by DWORF; DWORF increases activity by displacing sarcolipin (SLN), phospholamban (PLN) and myoregulin (MRLN). In terms of biological role, key regulator of striated muscle performance by acting as the major Ca(2+) ATPase responsible for the reuptake of cytosolic Ca(2+) into the sarcoplasmic reticulum. Catalyzes the hydrolysis of ATP coupled with the translocation of calcium from the cytosol to the sarcoplasmic reticulum lumen. Contributes to calcium sequestration involved in muscular excitation/contraction. The sequence is that of Sarcoplasmic/endoplasmic reticulum calcium ATPase 1 (ATP2A1) from Pelophylax lessonae (Pool frog).